We begin with the raw amino-acid sequence, 143 residues long: MSDLENIDYYDYKALLKRARSQIPDYVFQKDRFELPEIEILIEGNRTIIRNFRELAKAVNRDEEFFAKYLLKETGSAGNLEGGRLILQRRISPELLKSRINDFLREYVICRECGKPDTKIIKEGRVHLLKCMACGAIRPIRMI.

This sequence belongs to the eIF-2-beta/eIF-5 family. As to quaternary structure, heterotrimer composed of an alpha, a beta and a gamma chain.

In terms of biological role, eIF-2 functions in the early steps of protein synthesis by forming a ternary complex with GTP and initiator tRNA. The chain is Translation initiation factor 2 subunit beta (eif2b) from Methanocaldococcus jannaschii (strain ATCC 43067 / DSM 2661 / JAL-1 / JCM 10045 / NBRC 100440) (Methanococcus jannaschii).